The following is a 500-amino-acid chain: Lysine--tRNA ligase (500 aa).

Glutamate 411 and glutamate 418 together coordinate Mg(2+).

It belongs to the class-II aminoacyl-tRNA synthetase family. In terms of assembly, homodimer. It depends on Mg(2+) as a cofactor.

It is found in the cytoplasm. It carries out the reaction tRNA(Lys) + L-lysine + ATP = L-lysyl-tRNA(Lys) + AMP + diphosphate. The sequence is that of Lysine--tRNA ligase from Azoarcus sp. (strain BH72).